A 101-amino-acid chain; its full sequence is Co-chaperonin GroES (101 aa).

Belongs to the GroES chaperonin family. In terms of assembly, heptamer of 7 subunits arranged in a ring. Interacts with the chaperonin GroEL.

The protein resides in the cytoplasm. Together with the chaperonin GroEL, plays an essential role in assisting protein folding. The GroEL-GroES system forms a nano-cage that allows encapsulation of the non-native substrate proteins and provides a physical environment optimized to promote and accelerate protein folding. GroES binds to the apical surface of the GroEL ring, thereby capping the opening of the GroEL channel. The polypeptide is Co-chaperonin GroES (Thermus thermophilus (strain ATCC BAA-163 / DSM 7039 / HB27)).